The chain runs to 149 residues: Large ribosomal subunit protein bL9 (149 aa).

Position 89 is an N6-acetyllysine (Lys89).

The protein belongs to the bacterial ribosomal protein bL9 family.

Its function is as follows. Binds to the 23S rRNA. This is Large ribosomal subunit protein bL9 from Shigella boydii serotype 18 (strain CDC 3083-94 / BS512).